The chain runs to 387 residues: MSGGKKKSSFQITSVTTDYEGPGSPGASDPPAPPAPAGPPPRLPNGEPNPDPGGRGTPRNGSPPPGAPASRFRVVKLPQGLGEPYRRGRWTCVDVYERDLEPPSFGRLLEGIRGASGGTGGRSLDSRLELASLGISTPIPQPGLSQGPTSWLRPPPTSPGPQARSFTGGLGQLAGPGKAKVETPPLSASPPQQRPPGPGTGDSAQTLPSLRVEVESGGLAAGTPPLSRRRDGAVRLRMELVAPEETGKVPPIDSRPNSPALYFDASLVHKSPDPFGAAAAQSLSLARSMLAISGHLDSDDDSGSGSLVGIDNKIEQAMDLVKSHLMFAVREEVEVLKEQIRDLAERNAALEQENGLLRALASPEQLAQLPSSGLPRLGPSAPNGPSI.

Disordered stretches follow at residues 1-85 (MSGG…GEPY) and 135-232 (ISTP…RRDG). Residues 28–51 (SDPPAPPAPAGPPPRLPNGEPNPD) show a composition bias toward pro residues. The residue at position 57 (T57) is a Phosphothreonine. Phosphoserine is present on residues S62 and S165. T183 carries the post-translational modification Phosphothreonine. Phosphoserine occurs at positions 187 and 189. Residue T223 is modified to Phosphothreonine. S254, S258, and S271 each carry phosphoserine. Positions 336–357 (LKEQIRDLAERNAALEQENGLL) are leucine-zipper. S362 is modified (phosphoserine). Positions 368-387 (QLPSSGLPRLGPSAPNGPSI) are disordered.

Belongs to the TSC-22/Dip/Bun family. In terms of assembly, forms a homodimer or heterodimer. Forms a heterodimer with TSC22D1 isoforms 1 and 2. Interacts with NRBP1.

It localises to the nucleus. Its subcellular location is the cytoplasm. The protein localises to the cell projection. It is found in the dendrite. The protein resides in the synapse. Its function is as follows. Binds DNA and acts as a transcriptional repressor. Involved in the regulation of systematic glucose homeostasis and insulin sensitivity, via transcriptional repression of downstream insulin signaling targets such as OBP2A/LCN13. Acts as a negative regulator of lipogenic gene expression in hepatocytes and thereby mediates the control of very low-density lipoprotein release. May play a role in neurite elongation and survival. This Rattus norvegicus (Rat) protein is TSC22 domain family protein 4.